The chain runs to 173 residues: Large ribosomal subunit protein uL29c (173 aa).

The N-terminal 60 residues, 1 to 60, are a transit peptide targeting the chloroplast; it reads MLSLSIATPGTAAIFRRGTASATSTSSSFHGVRIQHQVSARVPAAATISSSSPKPSVVMM. The tract at residues 143–173 is disordered; it reads KKSIVPRPPPSLKKLQEEEAAEEAAEAAKSA. Serine 172 is modified (phosphoserine).

It belongs to the universal ribosomal protein uL29 family. As to quaternary structure, part of the 50S ribosomal subunit.

The protein resides in the plastid. Its subcellular location is the chloroplast. The polypeptide is Large ribosomal subunit protein uL29c (RPL29) (Arabidopsis thaliana (Mouse-ear cress)).